The sequence spans 118 residues: Small ribosomal subunit protein uS13 (118 aa).

Positions 92-118 (RRGLPVRGQRTKTNARTRKGPRKPIKK) are disordered.

The protein belongs to the universal ribosomal protein uS13 family. In terms of assembly, part of the 30S ribosomal subunit. Forms a loose heterodimer with protein S19. Forms two bridges to the 50S subunit in the 70S ribosome.

Its function is as follows. Located at the top of the head of the 30S subunit, it contacts several helices of the 16S rRNA. In the 70S ribosome it contacts the 23S rRNA (bridge B1a) and protein L5 of the 50S subunit (bridge B1b), connecting the 2 subunits; these bridges are implicated in subunit movement. Contacts the tRNAs in the A and P-sites. The sequence is that of Small ribosomal subunit protein uS13 from Pectobacterium carotovorum subsp. carotovorum (strain PC1).